The following is a 418-amino-acid chain: D-inositol 3-phosphate glycosyltransferase (418 aa).

A 1D-myo-inositol 3-phosphate-binding site is contributed by histidine 9. UDP-N-acetyl-alpha-D-glucosamine is bound by residues 15–16 (QP) and glycine 23. 1D-myo-inositol 3-phosphate is bound by residues 20-25 (DSGGMN), lysine 78, tyrosine 110, threonine 134, and arginine 154. UDP-N-acetyl-alpha-D-glucosamine contacts are provided by arginine 231, lysine 236, and arginine 294. 3 residues coordinate Mg(2+): tyrosine 303, arginine 304, and alanine 306. 2 residues coordinate UDP-N-acetyl-alpha-D-glucosamine: glutamate 316 and glutamate 324. Threonine 330 contributes to the Mg(2+) binding site.

Belongs to the glycosyltransferase group 1 family. MshA subfamily. Homodimer.

The enzyme catalyses 1D-myo-inositol 3-phosphate + UDP-N-acetyl-alpha-D-glucosamine = 1D-myo-inositol 2-acetamido-2-deoxy-alpha-D-glucopyranoside 3-phosphate + UDP + H(+). Functionally, catalyzes the transfer of a N-acetyl-glucosamine moiety to 1D-myo-inositol 3-phosphate to produce 1D-myo-inositol 2-acetamido-2-deoxy-glucopyranoside 3-phosphate in the mycothiol biosynthesis pathway. In Corynebacterium glutamicum (strain R), this protein is D-inositol 3-phosphate glycosyltransferase.